Consider the following 333-residue polypeptide: Tetraacyldisaccharide 4'-kinase (333 aa).

Residue 60–67 (TVGGTGKT) coordinates ATP.

Belongs to the LpxK family.

The catalysed reaction is a lipid A disaccharide + ATP = a lipid IVA + ADP + H(+). Its pathway is glycolipid biosynthesis; lipid IV(A) biosynthesis; lipid IV(A) from (3R)-3-hydroxytetradecanoyl-[acyl-carrier-protein] and UDP-N-acetyl-alpha-D-glucosamine: step 6/6. Its function is as follows. Transfers the gamma-phosphate of ATP to the 4'-position of a tetraacyldisaccharide 1-phosphate intermediate (termed DS-1-P) to form tetraacyldisaccharide 1,4'-bis-phosphate (lipid IVA). The protein is Tetraacyldisaccharide 4'-kinase of Ectopseudomonas mendocina (strain ymp) (Pseudomonas mendocina).